The sequence spans 709 residues: Phosphoribosylformylglycinamidine synthase subunit PurL (709 aa).

Histidine 36 is an active-site residue. ATP is bound by residues tyrosine 39 and lysine 80. Glutamate 82 provides a ligand contact to Mg(2+). Substrate is bound by residues 83–86 and arginine 105; that span reads SHNH. Histidine 84 acts as the Proton acceptor in catalysis. Aspartate 106 provides a ligand contact to Mg(2+). Glutamine 226 contributes to the substrate binding site. Aspartate 252 is a Mg(2+) binding site. Substrate is bound at residue 294–296; it reads ETQ. Positions 470 and 507 each coordinate ATP. Serine 510 lines the substrate pocket.

The protein belongs to the FGAMS family. Monomer. Part of the FGAM synthase complex composed of 1 PurL, 1 PurQ and 2 PurS subunits.

The protein resides in the cytoplasm. It catalyses the reaction N(2)-formyl-N(1)-(5-phospho-beta-D-ribosyl)glycinamide + L-glutamine + ATP + H2O = 2-formamido-N(1)-(5-O-phospho-beta-D-ribosyl)acetamidine + L-glutamate + ADP + phosphate + H(+). It functions in the pathway purine metabolism; IMP biosynthesis via de novo pathway; 5-amino-1-(5-phospho-D-ribosyl)imidazole from N(2)-formyl-N(1)-(5-phospho-D-ribosyl)glycinamide: step 1/2. Functionally, part of the phosphoribosylformylglycinamidine synthase complex involved in the purines biosynthetic pathway. Catalyzes the ATP-dependent conversion of formylglycinamide ribonucleotide (FGAR) and glutamine to yield formylglycinamidine ribonucleotide (FGAM) and glutamate. The FGAM synthase complex is composed of three subunits. PurQ produces an ammonia molecule by converting glutamine to glutamate. PurL transfers the ammonia molecule to FGAR to form FGAM in an ATP-dependent manner. PurS interacts with PurQ and PurL and is thought to assist in the transfer of the ammonia molecule from PurQ to PurL. In Saccharolobus solfataricus (strain ATCC 35092 / DSM 1617 / JCM 11322 / P2) (Sulfolobus solfataricus), this protein is Phosphoribosylformylglycinamidine synthase subunit PurL.